The following is a 172-amino-acid chain: LOB domain-containing protein 4 (172 aa).

Residues Ser-12–Val-113 enclose the LOB domain. The tract at residues Pro-125–Gly-152 is disordered. A compositionally biased stretch (low complexity) spans Pro-131–Pro-147.

Belongs to the LOB domain-containing protein family. In terms of tissue distribution, expressed in young shoots, roots, stems, leaves and flowers.

This chain is LOB domain-containing protein 4 (LBD4), found in Arabidopsis thaliana (Mouse-ear cress).